Here is a 238-residue protein sequence, read N- to C-terminus: Ribitol-5-phosphate cytidylyltransferase 2 (238 aa).

Residues 7–10 (LAGG) and 81–87 (GTDRNET) contribute to the CTP site.

This sequence belongs to the IspD/TarI cytidylyltransferase family. TarI subfamily.

It carries out the reaction D-ribitol 5-phosphate + CTP + H(+) = CDP-L-ribitol + diphosphate. It functions in the pathway cell wall biogenesis; poly(ribitol phosphate) teichoic acid biosynthesis. Functionally, catalyzes the transfer of the cytidylyl group of CTP to D-ribitol 5-phosphate. The protein is Ribitol-5-phosphate cytidylyltransferase 2 of Staphylococcus aureus (strain bovine RF122 / ET3-1).